Consider the following 300-residue polypeptide: Free fatty acid receptor 1 (300 aa).

At 1 to 8 (MALSPQLF) the chain is on the extracellular side. A helical membrane pass occupies residues 9–31 (FALYVSAFALGFPLNLLAIRGAV). Residues 32-41 (ARARLRLTPN) are Cytoplasmic-facing. The chain crosses the membrane as a helical span at residues 42–64 (LVYTLHLACSDLLLAITLPVKAV). Residues 65-79 (EALASGAWPLPLPLC) lie on the Extracellular side of the membrane. An intrachain disulfide couples C79 to C170. Residues 80-101 (PVFVLVHFAPLYAGGGFLAALS) traverse the membrane as a helical segment. Residues 102 to 121 (AGRYLGAAFPFGYQAVRRPR) lie on the Cytoplasmic side of the membrane. A helical transmembrane segment spans residues 122-142 (YSWGVCVAIWALVLCHMGLVL). Residues 143–178 (GLEAPGGWLNTTSSSLGINTPVNGSPVCLEAWDPNS) are Extracellular-facing. N-linked (GlcNAc...) asparagine glycosylation is present at N152. The helical transmembrane segment at 179 to 200 (ARPARLSFSILLFFVPLVITAF) threads the bilayer. The Cytoplasmic portion of the chain corresponds to 201-223 (CYVGCLRALAHSGLSHKRKLRAA). A helical transmembrane segment spans residues 224-248 (WAAGGAFLTLLLCLGPYNASNVASF). The Extracellular portion of the chain corresponds to 249-256 (VNPDLGGS). The helical transmembrane segment at 257–279 (WRKLGLITGSWSVVLNPLVTGYL) threads the bilayer. Residues 280–300 (GASPGRGTVCTTRTQGGTIQK) lie on the Cytoplasmic side of the membrane.

It belongs to the G-protein coupled receptor 1 family.

The protein resides in the cell membrane. G-protein coupled receptor for medium and long chain saturated and unsaturated fatty acids that plays an important role in glucose homeostasis. Fatty acid binding increases glucose-stimulated insulin secretion, and may also enhance the secretion of glucagon-like peptide 1 (GLP-1). May also play a role in bone homeostasis; receptor signaling activates pathways that inhibit osteoclast differentiation. Ligand binding leads to a conformation change that triggers signaling via G-proteins that activate phospholipase C, leading to an increase of the intracellular calcium concentration. Seems to act through a G(q) and G(i)-mediated pathway. Mediates the anti-inflammatory effects of omega-3 polyunsaturated fatty acids (PUFAs) via inhibition of NLRP3 inflammasome activation. This is Free fatty acid receptor 1 (FFAR1) from Mesocricetus auratus (Golden hamster).